The primary structure comprises 188 residues: Ribosome-recycling factor (188 aa).

This sequence belongs to the RRF family.

Its subcellular location is the cytoplasm. Its function is as follows. Responsible for the release of ribosomes from messenger RNA at the termination of protein biosynthesis. May increase the efficiency of translation by recycling ribosomes from one round of translation to another. This chain is Ribosome-recycling factor, found in Phenylobacterium zucineum (strain HLK1).